Here is a 268-residue protein sequence, read N- to C-terminus: ELL-associated factor 1 (268 aa).

The interval 106-268 (IQVKKTRAEG…LSESGSDSDD (163 aa)) is disordered. The span at 128–154 (TRPPQTSQPPPPPPPMPFRAPTKPPVG) shows a compositional bias: pro residues. Ser-165 is modified (phosphoserine). Residues 171-181 (DDIKRELRAEV) are compositionally biased toward basic and acidic residues. Residues 182-262 (DIIEQMSSSS…LRNDLQLSES (81 aa)) form a necessary for transactivation activity region. Positions 188–213 (SSSSGSSSSDSESSSGSDDDSSSSGG) are enriched in low complexity. Polar residues predominate over residues 238 to 268 (NGTSRPQGSNQLMNTLRNDLQLSESGSDSDD).

It belongs to the EAF family. In terms of assembly, component of the super elongation complex (SEC), at least composed of EAF1, EAF2, CDK9, MLLT3/AF9, AFF (AFF1 or AFF4), the P-TEFb complex and ELL (ELL, ELL2 or ELL3). Interacts with ELL and ELL2. As to expression, strongly expressed in heart, brain, placenta, lung, liver, skeletal muscle, kidney, pancreas, spleen, prostate, testis, small intestine and colon. Poorly expressed in thymus.

The protein resides in the nucleus speckle. The protein localises to the nucleus. It is found in the cajal body. In terms of biological role, acts as a transcriptional transactivator of ELL and ELL2 elongation activities. The chain is ELL-associated factor 1 (EAF1) from Homo sapiens (Human).